A 376-amino-acid chain; its full sequence is MLSSAHLVPTSVQRAQSWICRSSRSFMDLKALLSSLNDFASLSFAESWDNVGLLVEPSPPHTVNTLFLTNDLTEEVMDEALQKKADFILSYHPPIFRPMKHITWKTWKECLVIRALENRVAVYSPHTAYDAAPQGVNSWLAKGLGTCTTRPIHPSRAPDYPTEGAHRLEFSVNRSQDLDKVMSTLRGVGGVSVTSFPARCDGEEQTRISLNCTQKTLMQVLAFLSQDRQLYQKTEILSLEKPLLLHTGMGRLCTLDESVSLAIMIERIKTHLKLSHLRLALGVGRTLESQVKVVALCAGSGGSVLQGVEADLYLTGEMSHHDVLDAASKGINVILCEHSNTERGFLSELQEMLGVHFENKINIILSETDRDPLRVV.

Position 108 is an N6-acetyllysine (Lys108). A mediates interaction with COPS2 region spans residues 243–376 (LLLHTGMGRL…ETDRDPLRVV (134 aa)). Residue Thr254 is modified to Phosphothreonine. Ser258 bears the Phosphoserine mark.

Belongs to the GTP cyclohydrolase I type 2/NIF3 family. Homodimer. Interacts with COPS2. Interacts with THOC7. In terms of tissue distribution, ubiquitous. Detected in all tissues tested with higher expression in cerebellum, heart and kidney and to a lower level in cerebrum, lung, liver, spleen and muscle.

It localises to the cytoplasm. It is found in the nucleus. May function as a transcriptional corepressor through its interaction with COPS2, negatively regulating the expression of genes involved in neuronal differentiation. This Mus musculus (Mouse) protein is NIF3-like protein 1.